The primary structure comprises 1683 residues: Phospholipase D1 (1683 aa).

Disordered regions lie at residues 1-150 (MSNV…AYTQ), 173-198 (LKSS…QQVN), 259-289 (ILDI…SIPR), and 384-416 (VMEK…NITS). Ser2 carries the N-acetylserine modification. Phosphoserine occurs at positions 8 and 30. 3 stretches are compositionally biased toward basic and acidic residues: residues 20–34 (SVTE…RPDE), 63–82 (NGKE…DRNL), and 90–112 (SLDH…ENMH). Residues 116–125 (NNLHSSNNNV) show a composition bias toward low complexity. The segment covering 141 to 150 (RRSSSVAYTQ) has biased composition (polar residues). Position 145 is a phosphoserine (Ser145). Positions 263–279 (TNSNHNHRGNNNNNTGE) are enriched in low complexity. The 197-residue stretch at 291-487 (SSIISISSNV…EFYELSPLGN (197 aa)) folds into the PX domain. Over residues 392 to 404 (KPSSAASAPHTSE) the composition is skewed to polar residues. A compositionally biased stretch (low complexity) spans 405 to 416 (NNNNDNGSNITS). A PH domain is found at 496–664 (QGKQGYLVIR…SSIIKMSTST (169 aa)). PLD phosphodiesterase domains are found at residues 791 to 818 (YFWA…CYGR) and 1091 to 1118 (EQLY…NERS). Catalysis depends on residues His796, Lys798, Asp803, His1096, Lys1098, and Asp1103. A disordered region spans residues 1430 to 1465 (KDMRRHLSSSTESTRNGSNSLPLNEKSNEGESTNVD). The span at 1437–1451 (SSSTESTRNGSNSLP) shows a compositional bias: polar residues. Residue Ser1461 is modified to Phosphoserine. Position 1462 is a phosphothreonine (Thr1462).

This sequence belongs to the phospholipase D family. In terms of assembly, interacts with SRF1.

It catalyses the reaction a 1,2-diacyl-sn-glycero-3-phosphocholine + H2O = a 1,2-diacyl-sn-glycero-3-phosphate + choline + H(+). With respect to regulation, activity is dependent of phosphatidylinositol 4,5-bisphosphate and the regulator SRF1. Inhibited by magnesium. Its function is as follows. Required for meiosis and spore formation. Seems to be involved in the coordinate induction of late meiotic events. PLD activity is induced under sporulation conditions and seems to be necessary to complete the meiotic cycle, but not for vegetative cell growth. The sequence is that of Phospholipase D1 (SPO14) from Saccharomyces cerevisiae (strain ATCC 204508 / S288c) (Baker's yeast).